A 62-amino-acid polypeptide reads, in one-letter code: Large ribosomal subunit protein bL35 (62 aa).

Residues 31–62 are disordered; it reads HLAQNKTTKQKRQSRKSAQMHSSDLKRFKALI. The segment covering 53-62 has biased composition (basic and acidic residues); sequence SDLKRFKALI.

The protein belongs to the bacterial ribosomal protein bL35 family.

In Mycoplasmopsis agalactiae (strain NCTC 10123 / CIP 59.7 / PG2) (Mycoplasma agalactiae), this protein is Large ribosomal subunit protein bL35.